Reading from the N-terminus, the 330-residue chain is Glycerol-3-phosphate dehydrogenase [NAD(P)+] (330 aa).

Residues serine 10, tryptophan 11, arginine 31, and lysine 105 each coordinate NADPH. Sn-glycerol 3-phosphate contacts are provided by lysine 105, glycine 135, and serine 137. An NADPH-binding site is contributed by alanine 139. Residues lysine 190, aspartate 243, serine 253, arginine 254, and asparagine 255 each coordinate sn-glycerol 3-phosphate. Catalysis depends on lysine 190, which acts as the Proton acceptor. Arginine 254 contacts NADPH. NADPH-binding residues include valine 278 and glutamate 280.

This sequence belongs to the NAD-dependent glycerol-3-phosphate dehydrogenase family.

The protein localises to the cytoplasm. The enzyme catalyses sn-glycerol 3-phosphate + NAD(+) = dihydroxyacetone phosphate + NADH + H(+). It catalyses the reaction sn-glycerol 3-phosphate + NADP(+) = dihydroxyacetone phosphate + NADPH + H(+). It participates in membrane lipid metabolism; glycerophospholipid metabolism. Its function is as follows. Catalyzes the reduction of the glycolytic intermediate dihydroxyacetone phosphate (DHAP) to sn-glycerol 3-phosphate (G3P), the key precursor for phospholipid synthesis. In Oleidesulfovibrio alaskensis (strain ATCC BAA-1058 / DSM 17464 / G20) (Desulfovibrio alaskensis), this protein is Glycerol-3-phosphate dehydrogenase [NAD(P)+].